The following is a 273-amino-acid chain: Shikimate dehydrogenase (NADP(+)) (273 aa).

Residues 19-21 and threonine 66 each bind shikimate; that span reads SQS. Residue lysine 70 is the Proton acceptor of the active site. Residue glutamate 82 participates in NADP(+) binding. Shikimate-binding residues include asparagine 91 and aspartate 107. Residues 131–135 and methionine 217 each bind NADP(+); that span reads GAGGA. Tyrosine 219 contributes to the shikimate binding site. Residue glycine 241 coordinates NADP(+).

It belongs to the shikimate dehydrogenase family. As to quaternary structure, homodimer.

It catalyses the reaction shikimate + NADP(+) = 3-dehydroshikimate + NADPH + H(+). It functions in the pathway metabolic intermediate biosynthesis; chorismate biosynthesis; chorismate from D-erythrose 4-phosphate and phosphoenolpyruvate: step 4/7. Functionally, involved in the biosynthesis of the chorismate, which leads to the biosynthesis of aromatic amino acids. Catalyzes the reversible NADPH linked reduction of 3-dehydroshikimate (DHSA) to yield shikimate (SA). The chain is Shikimate dehydrogenase (NADP(+)) from Buchnera aphidicola subsp. Schizaphis graminum (strain Sg).